Reading from the N-terminus, the 112-residue chain is UPF0060 membrane protein IL2332 (112 aa).

Transmembrane regions (helical) follow at residues 10-30 (LGLF…PYLW), 36-56 (SAWL…LLTL), 64-84 (VYAA…KAVE), and 90-110 (TYDA…AVGW).

The protein belongs to the UPF0060 family.

Its subcellular location is the cell inner membrane. This is UPF0060 membrane protein IL2332 from Idiomarina loihiensis (strain ATCC BAA-735 / DSM 15497 / L2-TR).